Consider the following 623-residue polypeptide: Transketolase (623 aa).

M1 is modified (N-acetylmethionine). 2 positions are modified to N6-acetyllysine: K6 and K11. H37 provides a ligand contact to substrate. Residues S40 and H77 each contribute to the thiamine diphosphate site. S104 carries the post-translational modification Phosphoserine. Position 123-125 (123-125 (GSL)) interacts with thiamine diphosphate. Residue K144 is modified to N6-acetyllysine. A Mg(2+)-binding site is contributed by D155. The thiamine diphosphate site is built by G156 and N185. Mg(2+) is bound by residues N185 and L187. N6-acetyllysine is present on residues K204, K232, and K241. The thiamine diphosphate site is built by K244 and H258. Position 258 (H258) interacts with substrate. K260 carries the post-translational modification N6-acetyllysine. Y275 carries the phosphotyrosine modification. T287 is modified (phosphothreonine). At S295 the chain carries Phosphoserine. R318 serves as a coordination point for substrate. Residue K352 forms a Glycyl lysine isopeptide (Lys-Gly) (interchain with G-Cter in SUMO2) linkage. The active-site Proton donor is E366. F392 provides a ligand contact to thiamine diphosphate. 2 residues coordinate substrate: H416 and D424. Q428 serves as a coordination point for thiamine diphosphate. Residue R474 participates in substrate binding. K538 and K603 each carry N6-acetyllysine.

Belongs to the transketolase family. Homodimer. Requires Mg(2+) as cofactor. Ca(2+) is required as a cofactor. It depends on Mn(2+) as a cofactor. Co(2+) serves as cofactor. The cofactor is thiamine diphosphate.

The enzyme catalyses D-sedoheptulose 7-phosphate + D-glyceraldehyde 3-phosphate = aldehydo-D-ribose 5-phosphate + D-xylulose 5-phosphate. Its function is as follows. Catalyzes the transfer of a two-carbon ketol group from a ketose donor to an aldose acceptor, via a covalent intermediate with the cofactor thiamine pyrophosphate. In Pongo abelii (Sumatran orangutan), this protein is Transketolase (TKT).